A 430-amino-acid chain; its full sequence is Enolase (430 aa).

Glutamine 167 is a binding site for (2R)-2-phosphoglycerate. Glutamate 209 acts as the Proton donor in catalysis. Aspartate 246, glutamate 287, and aspartate 314 together coordinate Mg(2+). (2R)-2-phosphoglycerate is bound by residues lysine 339, arginine 368, serine 369, and lysine 390. Lysine 339 functions as the Proton acceptor in the catalytic mechanism.

It belongs to the enolase family. Requires Mg(2+) as cofactor.

It localises to the cytoplasm. Its subcellular location is the secreted. It is found in the cell surface. The catalysed reaction is (2R)-2-phosphoglycerate = phosphoenolpyruvate + H2O. The protein operates within carbohydrate degradation; glycolysis; pyruvate from D-glyceraldehyde 3-phosphate: step 4/5. Functionally, catalyzes the reversible conversion of 2-phosphoglycerate (2-PG) into phosphoenolpyruvate (PEP). It is essential for the degradation of carbohydrates via glycolysis. This chain is Enolase, found in Prochlorococcus marinus subsp. pastoris (strain CCMP1986 / NIES-2087 / MED4).